Reading from the N-terminus, the 3336-residue chain is Pericentrin (3336 aa).

Disordered stretches follow at residues 1 to 71 (MEVE…DICK) and 81 to 100 (GAGG…KRED). A compositionally biased stretch (basic and acidic residues) spans 27 to 37 (TKGDSSHSEKK). Phosphoserine is present on S44. S188 bears the Phosphoserine mark. Phosphothreonine is present on T191. A coiled-coil region spans residues 258 to 553 (HTAQLELTQA…RLQGAREDAL (296 aa)). The disordered stretch occupies residues 569–589 (KPEKGRKDHVDELEPERHKES). Phosphoserine is present on residues S610 and S682. 2 coiled-coil regions span residues 675–835 (TEHK…DALH) and 1010–1146 (TILT…MLKA). S1245 carries the phosphoserine modification. A coiled-coil region spans residues 1299 to 1949 (NEETAQVVRK…FLRCQVELDR (651 aa)). A disordered region spans residues 1619–1638 (TLDAGRCPEPPSGSPPEGPE). Residues 1626–1636 (PEPPSGSPPEG) show a composition bias toward pro residues. Residues S1653 and S1712 each carry the phosphoserine modification. A disordered region spans residues 1954 to 1974 (RATAHTRVPGAHPQPRMDGGA). S2044 is subject to Phosphoserine. Positions 2064–2082 (VDLVAQVKQLQEKLNRLLY) form a coiled coil. The disordered stretch occupies residues 2168-2214 (SLIPDEMPDSPIQEKSECQDMSLSSPTSVLGGSRHQSHTAEAGPRKS). S2177, S2192, S2225, S2226, and S2327 each carry phosphoserine. Polar residues predominate over residues 2186 to 2197 (QDMSLSSPTSVL). The disordered stretch occupies residues 2318–2374 (SFDSQETLSSPPPGLEGKADRSEKSDGSGFGARLSPGSGGPEAQTAGPVTPASISGR). The segment covering 2334-2343 (GKADRSEKSD) has biased composition (basic and acidic residues). Phosphoserine is present on residues S2352, S2355, S2477, and S2486. Residues 2536-3086 (QEKLQHLRTA…EKLLKHHLQK (551 aa)) adopt a coiled-coil conformation. 2 disordered regions span residues 2875–2910 (LEQS…WRKW) and 3084–3126 (LQKG…EEAH). Basic and acidic residues-rich tracts occupy residues 2876 to 2896 (EQSH…RSAE) and 3092 to 3102 (RSERSAWKPDE). Residues 2983-3246 (LSAARLLTSF…ARQPQSPPRT (264 aa)) are interaction with NEK2. A calmodulin-binding region spans residues 3195-3208 (RFRTAVRVVIAILR). The interval 3224–3300 (ALAQGKAPRP…RSLTASQDPE (77 aa)) is disordered. Residues 3226-3240 (AQGKAPRPGPRARQP) are compositionally biased toward low complexity. The segment covering 3283–3297 (PSPNSRLERSLTASQ) has biased composition (polar residues). S3302 carries the post-translational modification Phosphoserine.

Interacts with CHD3. Interacts with CHD4; the interaction regulates centrosome integrity. Interacts with DISC1 and PCM1. Binds calmodulin. Interacts with CDK5RAP2; the interaction is leading to centrosomal localization of PCNT and CDK5RAP2. Interacts with isoform 1 of NEK2. Interacts with CEP131. Interacts with CCDC13. Interacts with CEP68. Interacts with ATF5; the ATF5:PCNT:polyglutamylated tubulin (PGT) tripartite unites the mother centriole and the pericentriolar material (PCM) in the centrosome. Cleaved during mitotis which leads to removal of CDK5RAP2 from the centrosome and promotes centriole disengagement and subsequent centriole separation. The C-terminal fragment is rapidly degraded following cleavage. In terms of processing, ubiquitinated by TRIM43; leading to proteasomal degradation. Expressed in all tissues tested, including placenta, liver, kidney and thymus.

The protein resides in the cytoplasm. Its subcellular location is the cytoskeleton. The protein localises to the microtubule organizing center. It is found in the centrosome. Its function is as follows. Integral component of the filamentous matrix of the centrosome involved in the initial establishment of organized microtubule arrays in both mitosis and meiosis. Plays a role, together with DISC1, in the microtubule network formation. Is an integral component of the pericentriolar material (PCM). May play an important role in preventing premature centrosome splitting during interphase by inhibiting NEK2 kinase activity at the centrosome. This Homo sapiens (Human) protein is Pericentrin (PCNT).